Here is a 507-residue protein sequence, read N- to C-terminus: Dolichyl pyrophosphate Man9GlcNAc2 alpha-1,3-glucosyltransferase (507 aa).

The Cytoplasmic portion of the chain corresponds to M1–K3. A helical transmembrane segment spans residues W4 to G24. The Lumenal segment spans residues S25–T114. N59 is a glycosylation site (N-linked (GlcNAc...) asparagine). Residues T115–L135 form a helical membrane-spanning segment. Over K136–K143 the chain is Cytoplasmic. The helical transmembrane segment at V144 to F164 threads the bilayer. The Lumenal segment spans residues Q165–S168. A helical membrane pass occupies residues V169–G189. Topologically, residues S190 to K226 are cytoplasmic. A helical transmembrane segment spans residues G227 to L247. At P248 to Q297 the chain is on the lumenal side. Residues L298–V318 form a helical membrane-spanning segment. Residues Q319–L338 lie on the Cytoplasmic side of the membrane. A helical membrane pass occupies residues F339–I359. Topologically, residues N360–E361 are lumenal. Residues V362–L382 form a helical membrane-spanning segment. Over K383 to L387 the chain is Cytoplasmic. A helical membrane pass occupies residues L388–F408. The Lumenal portion of the chain corresponds to E409 to S441. Residues L442 to P462 form a helical membrane-spanning segment. Residues P463 to S473 are Cytoplasmic-facing. Residues V474 to L494 form a helical membrane-spanning segment. The Lumenal segment spans residues W495–S507.

The protein belongs to the ALG6/ALG8 glucosyltransferase family.

It localises to the endoplasmic reticulum membrane. The catalysed reaction is an alpha-D-Man-(1-&gt;2)-alpha-D-Man-(1-&gt;2)-alpha-D-Man-(1-&gt;3)-[alpha-D-Man-(1-&gt;2)-alpha-D-Man-(1-&gt;3)-[alpha-D-Man-(1-&gt;2)-alpha-D-Man-(1-&gt;6)]-alpha-D-Man-(1-&gt;6)]-beta-D-Man-(1-&gt;4)-beta-D-GlcNAc-(1-&gt;4)-alpha-D-GlcNAc-diphospho-di-trans,poly-cis-dolichol + a di-trans,poly-cis-dolichyl beta-D-glucosyl phosphate = an alpha-D-Glc-(1-&gt;3)-alpha-D-Man-(1-&gt;2)-alpha-D-Man-(1-&gt;2)-alpha-D-Man-(1-&gt;3)-[alpha-D-Man-(1-&gt;2)-alpha-D-Man-(1-&gt;3)-[alpha-D-Man-(1-&gt;2)-alpha-D-Man-(1-&gt;6)]-alpha-D-Man-(1-&gt;6)]-beta-D-Man-(1-&gt;4)-beta-D-GlcNAc-(1-&gt;4)-alpha-D-GlcNAc-diphospho-di-trans,poly-cis-dolichol + a di-trans,poly-cis-dolichyl phosphate + H(+). The protein operates within protein modification; protein glycosylation. Functionally, dolichyl pyrophosphate Man9GlcNAc2 alpha-1,3-glucosyltransferase that operates in the biosynthetic pathway of dolichol-linked oligosaccharides, the glycan precursors employed in protein asparagine (N)-glycosylation. The assembly of dolichol-linked oligosaccharides begins on the cytosolic side of the endoplasmic reticulum membrane and finishes in its lumen. The sequential addition of sugars to dolichol pyrophosphate produces dolichol-linked oligosaccharides containing fourteen sugars, including two GlcNAcs, nine mannoses and three glucoses. Once assembled, the oligosaccharide is transferred from the lipid to nascent proteins by oligosaccharyltransferases. In the lumen of the endoplasmic reticulum, adds the first glucose residue from dolichyl phosphate glucose (Dol-P-Glc) onto the lipid-linked oligosaccharide intermediate Man(9)GlcNAc(2)-PP-Dol to produce Glc(1)Man(9)GlcNAc(2)-PP-Dol. Glc(1)Man(9)GlcNAc(2)-PP-Dol is a substrate for ALG8, the following enzyme in the biosynthetic pathway. This chain is Dolichyl pyrophosphate Man9GlcNAc2 alpha-1,3-glucosyltransferase, found in Gallus gallus (Chicken).